The following is a 476-amino-acid chain: Raffinose invertase (476 aa).

Substrate contacts are provided by residues 35–38 (WMND), Gln54, 97–98 (FS), 159–160 (RD), Glu214, and Trp297. Asp38 is an active-site residue.

The protein belongs to the glycosyl hydrolase 32 family. In terms of assembly, homodimer.

It catalyses the reaction Hydrolysis of terminal non-reducing beta-D-fructofuranoside residues in beta-D-fructofuranosides.. Functionally, may prevent the potential hasard of excessive sucrose accumulation. This is Raffinose invertase (rafD) from Escherichia coli.